The primary structure comprises 295 residues: MAAKLLKGAEVAKEIRAELKTEVEQLQSKHGVVPGLVTILVGENPASQSYVRAKQNTAHELGFHSVQDNQPADLEENRLLDLIDKYNKDPSIHGILVQLPLPKHINENRILLSIDPSKDVDAFHPVNVGKLMIGEPDYLPCTPAGIQELLVRSGTQVSGAEVTIVGRSNIVGKPIAMMLVQKANGANATITVCHTRTKDVASHTRRADILIVAAGVAEYVKGNMIKPGAVVIDVGVNEVGKTADGKRILKGDVAFDEAVEVASAITPVPGGVGPMTITMLMKNTVRACKVHNKIA.

Residues 166 to 168, Thr-195, and Val-236 each bind NADP(+); that span reads GRS.

The protein belongs to the tetrahydrofolate dehydrogenase/cyclohydrolase family. In terms of assembly, homodimer.

It catalyses the reaction (6R)-5,10-methylene-5,6,7,8-tetrahydrofolate + NADP(+) = (6R)-5,10-methenyltetrahydrofolate + NADPH. The catalysed reaction is (6R)-5,10-methenyltetrahydrofolate + H2O = (6R)-10-formyltetrahydrofolate + H(+). Its pathway is one-carbon metabolism; tetrahydrofolate interconversion. In terms of biological role, catalyzes the oxidation of 5,10-methylenetetrahydrofolate to 5,10-methenyltetrahydrofolate and then the hydrolysis of 5,10-methenyltetrahydrofolate to 10-formyltetrahydrofolate. In Syntrophobacter fumaroxidans (strain DSM 10017 / MPOB), this protein is Bifunctional protein FolD.